A 542-amino-acid polypeptide reads, in one-letter code: Aminotriazole resistance protein (542 aa).

Over 1 to 108 (MGNQSLVVLT…SFGSEGNSKS (108 aa)) the chain is Cytoplasmic. Residues 109-129 (WLMASFPLVSGSFILISGRLG) form a helical membrane-spanning segment. Over 130–136 (DIYGLKK) the chain is Extracellular. A helical membrane pass occupies residues 137 to 157 (MLLVGYVLVIIWSLICGITKY). The Cytoplasmic segment spans residues 158–172 (SGSDTFFIISRAFQG). A helical transmembrane segment spans residues 173–193 (LGIAFVLPNVLGIIGNIYVGG). The Extracellular portion of the chain corresponds to 194-198 (TFRKN). The chain crosses the membrane as a helical span at residues 199–219 (IVISFVGAMAPIGATLGCLFA). The Cytoplasmic segment spans residues 220–231 (GLIGTEDPKQWP). A helical membrane pass occupies residues 232-252 (WAFYAYSIAAFINFVLSIYAI). Topologically, residues 253-262 (PSTIPTNIHH) are extracellular. Residues 263–283 (FSMDWIGSVLGVIGLILLNFV) traverse the membrane as a helical segment. The Cytoplasmic segment spans residues 284–295 (WNQAPISGWNQA). The helical transmembrane segment at 296-316 (YIIVILIISVIFLVVFIIYEI) threads the bilayer. The Extracellular portion of the chain corresponds to 317-333 (RFAKTPLLPRAVIKDRH). Residues 334-354 (MIQIMLALFFGWGSFGIFTFY) traverse the membrane as a helical segment. At 355–371 (YFQFQLNIRQYTALWAG) the chain is on the cytoplasmic side. Residues 372–392 (GTYFMFLIWGIIAALLVGFTI) form a helical membrane-spanning segment. Topologically, residues 393–399 (KNVSPSV) are extracellular. Residues 400–420 (FLFFSMVAFNVGSIMASVTPV) form a helical membrane-spanning segment. Residues 421 to 429 (HETYFRTQL) lie on the Cytoplasmic side of the membrane. The chain crosses the membrane as a helical span at residues 430 to 450 (GTMIILSFGMDLSFPASSIIF). The Extracellular segment spans residues 451-505 (SDNLPMEYQGMAGSLVNTVVNYSMSLCLGMGATVETQVNSDGKHLLKGYRGAQYL). Residue Asn-471 is glycosylated (N-linked (GlcNAc...) asparagine). A helical membrane pass occupies residues 506-526 (GIGLASLACMISGLYMVESFI). The Cytoplasmic segment spans residues 527–542 (KGRRARAAAEYDCTVA).

It belongs to the major facilitator superfamily.

The protein resides in the membrane. In terms of biological role, putative component of the machinery responsible for pumping aminotriazole (and possibly other toxic compounds) out of the cell. Probable ATP-dependent export permease. Appears to confer resistance only to aminotriazole. The chain is Aminotriazole resistance protein (ATR1) from Saccharomyces cerevisiae (strain ATCC 204508 / S288c) (Baker's yeast).